Reading from the N-terminus, the 1670-residue chain is Protein TASOR (1670 aa).

The segment at 1–110 is disordered; the sequence is MATAVETEAC…QIPRKSREKK (110 aa). The residue at position 2 (alanine 2) is an N-acetylalanine. Positions 67 to 78 are enriched in polar residues; it reads QSLSHEQPQDSS. At serine 344 the chain carries Phosphoserine. Residue lysine 586 forms a Glycyl lysine isopeptide (Lys-Gly) (interchain with G-Cter in SUMO2) linkage. 4 positions are modified to phosphoserine: serine 633, serine 636, serine 673, and serine 800. Residues lysine 823 and lysine 832 each participate in a glycyl lysine isopeptide (Lys-Gly) (interchain with G-Cter in SUMO2) cross-link. A Phosphoserine modification is found at serine 843. A Glycyl lysine isopeptide (Lys-Gly) (interchain with G-Cter in SUMO2) cross-link involves residue lysine 872. A disordered region spans residues 921–947; it reads TGGNARSPEDQLGKHGEKQTPGMKSPE. 3 positions are modified to phosphoserine: serine 927, serine 971, and serine 979. Over residues 927–938 the composition is skewed to basic and acidic residues; it reads SPEDQLGKHGEK. Phosphothreonine is present on residues threonine 982 and threonine 1049. A Phosphoserine modification is found at serine 1103. The segment covering 1532–1545 has biased composition (basic and acidic residues); it reads ETKGSRGTDQKKNT. Disordered regions lie at residues 1532 to 1558 and 1638 to 1670; these read ETKG…VQNS and FLSA…SQEK. Polar residues-rich tracts occupy residues 1546–1558 and 1659–1670; these read QIEL…VQNS and KSDSSRPYSQEK. Serine 1552 carries the post-translational modification Phosphoserine.

This sequence belongs to the TASOR family. As to quaternary structure, component of the HUSH complex; at least composed of TASOR, PPHLN1 and MPHOSPH8. Interacts with MORC2; the interaction associateS MORC2 with the HUSH complex which recruits MORC2 to heterochromatic loci. Interacts with ZNF638; leading to recruitment of the HUSH complex to unintegrated retroviral DNA. Interacts with INPP5A, EML1, SV1L, GPSM2, ITGB3BP, CNTN1, ETFA, PSMD8, S100A10, MPHOSPH8, TMEM100, ALB, PARPBP, HCFC2, NCBP1 and SETDB1.

It is found in the nucleus. Its subcellular location is the chromosome. Functionally, component of the HUSH complex, a multiprotein complex that mediates epigenetic repression. The HUSH complex is recruited to genomic loci rich in H3K9me3 and is required to maintain transcriptional silencing by promoting recruitment of SETDB1, a histone methyltransferase that mediates further deposition of H3K9me3, as well as MORC2. Also represses L1 retrotransposons in collaboration with MORC2 and, probably, SETDB1, the silencing is dependent of repressive epigenetic modifications, such as H3K9me3 mark. Silencing events often occur within introns of transcriptionally active genes, and lead to the down-regulation of host gene expression. The HUSH complex is also involved in the silencing of unintegrated retroviral DNA by being recruited by ZNF638: some part of the retroviral DNA formed immediately after infection remains unintegrated in the host genome and is transcriptionally repressed. Plays a crucial role in early embryonic development. Involved in the organization of spindle poles and spindle apparatus assembly during zygotic division. Plays an important role in maintaining epiblast fitness or potency. The protein is Protein TASOR of Homo sapiens (Human).